Reading from the N-terminus, the 1283-residue chain is 5-oxoprolinase PfmaA (1283 aa).

The tract at residues 1256 to 1283 (NTPGGGAWGKPEGDADGYREEDQAGDGI) is disordered. Residues 1266 to 1277 (PEGDADGYREED) show a composition bias toward basic and acidic residues.

This sequence belongs to the oxoprolinase family. In terms of assembly, homodimer.

It carries out the reaction 5-oxo-L-proline + ATP + 2 H2O = L-glutamate + ADP + phosphate + H(+). 5-oxoprolinase; part of the gene cluster that mediates the biosynthesis of dihydroxynaphthalene (DHN)-melanin, a bluish-green pigment forming a dark layer in the conidial wall that protects the conidia from UV radiations. The first step of the pathway is the production of the pentaketide 1,3,6,8-tetrahydroxynaphthalene (1,3,6,8-THN or T4HN) by the polyketide synthase PfmaE though condensation of acetyl-CoA with malonyl-CoA. T4HN is not stable and easily oxidizes into the stable form flaviolin. T4HN is also substrate of the hydroxynaphthalene reductase PfmaG to yield scytalone. The scytalone dehydratase PfmaJ then reduces scytalone to 1,3,8-THN. 1,3,8-THN is then substrate of the hydroxynaphthalene reductase PfmaI to yield vermelone. Vermelone is further converted by the multicopper oxidase PfmaD to 1,8-DHN. Finally the laccase PFICI_06862 transforms 1,8-DHN to DHN-melanin. The roles of the 5-oxoprolinase PfmaA and the proline iminopeptidase PfmaB within the cluster have not been elucidated yet. This is 5-oxoprolinase PfmaA from Pestalotiopsis fici (strain W106-1 / CGMCC3.15140).